Consider the following 621-residue polypeptide: uncharacterized protein (621 aa).

The protein resides in the plastid. It localises to the chloroplast. This is an uncharacterized protein from Porphyra purpurea (Red seaweed).